A 184-amino-acid chain; its full sequence is Glutathione-regulated potassium-efflux system ancillary protein KefG (184 aa).

This sequence belongs to the NAD(P)H dehydrogenase (quinone) family. KefG subfamily. As to quaternary structure, interacts with KefB.

The protein resides in the cell inner membrane. The enzyme catalyses a quinone + NADH + H(+) = a quinol + NAD(+). It carries out the reaction a quinone + NADPH + H(+) = a quinol + NADP(+). Its function is as follows. Regulatory subunit of a potassium efflux system that confers protection against electrophiles. Required for full activity of KefB. The chain is Glutathione-regulated potassium-efflux system ancillary protein KefG from Shigella dysenteriae serotype 1 (strain Sd197).